The sequence spans 124 residues: Small ribosomal subunit protein eS6 (124 aa).

This sequence belongs to the eukaryotic ribosomal protein eS6 family.

This is Small ribosomal subunit protein eS6 from Methanococcus maripaludis (strain C6 / ATCC BAA-1332).